A 556-amino-acid chain; its full sequence is Optineurin (556 aa).

Residues 1-33 (MSSKPQIRPAENGEHCRSKMENGMDSMAPPTLS) are disordered. The span at 11 to 22 (ENGEHCRSKMEN) shows a compositional bias: basic and acidic residues. Residues 38 to 164 (EEMVQQMKEL…SELQVKLNIA (127 aa)) are a coiled coil. An LIR motif is present at residues 168-173 (DSFVEI). Residues 219-487 (VSQLLCCLRN…LLKEQQNLED (269 aa)) adopt a coiled-coil conformation. A disordered region spans residues 245-274 (ERLSKMENETSNCLESGTQTNQEEESSEAI). A compositionally biased stretch (polar residues) spans 253 to 265 (ETSNCLESGTQTN). Residues 453–458 (DFHAER) carry the UBAN motif. The segment at 496-524 (MQNRHGARAPDREHSPRLVQRGTGSQEWP) is disordered. The CCHC NOA-type zinc-finger motif lies at 526–556 (QRNISIYSCPKCEEILPDLDTLQIHVMDCIN). Positions 534, 537, 550, and 554 each coordinate Zn(2+).

In terms of assembly, binds to linear ubiquitin chains. Interacts with LC3 family members. As to expression, expressed in erythrocytes, skeletal muscle, heart, spleen and brain. Weakly expressed in lung and liver (at protein level).

It localises to the cytoplasm. Its subcellular location is the perinuclear region. The protein localises to the golgi apparatus. It is found in the trans-Golgi network. The protein resides in the cytoplasmic vesicle. It localises to the recycling endosome. Its subcellular location is the autophagosome. Functionally, probably part of the TNF-alpha signaling pathway that can shift the equilibrium toward induction of cell death. May act by regulating membrane trafficking and cellular morphogenesis. May act as autophagy receptor that interacts directly with both the cargo to become degraded and an autophagy modifier of the MAP1 LC3 family. In Gallus gallus (Chicken), this protein is Optineurin (OPTN).